We begin with the raw amino-acid sequence, 444 residues long: UDP-N-acetylmuramoylalanine--D-glutamate ligase (444 aa).

Residue 109 to 115 coordinates ATP; that stretch reads GSNGKTT.

The protein belongs to the MurCDEF family.

It localises to the cytoplasm. The catalysed reaction is UDP-N-acetyl-alpha-D-muramoyl-L-alanine + D-glutamate + ATP = UDP-N-acetyl-alpha-D-muramoyl-L-alanyl-D-glutamate + ADP + phosphate + H(+). It functions in the pathway cell wall biogenesis; peptidoglycan biosynthesis. In terms of biological role, cell wall formation. Catalyzes the addition of glutamate to the nucleotide precursor UDP-N-acetylmuramoyl-L-alanine (UMA). This chain is UDP-N-acetylmuramoylalanine--D-glutamate ligase, found in Bacteroides thetaiotaomicron (strain ATCC 29148 / DSM 2079 / JCM 5827 / CCUG 10774 / NCTC 10582 / VPI-5482 / E50).